Consider the following 903-residue polypeptide: Protein translocase subunit SecA (903 aa).

ATP is bound by residues Gln89, 107 to 111 (GEGKT), and Asp502. Zn(2+)-binding residues include Cys886, Cys888, Cys897, and His898.

It belongs to the SecA family. Monomer and homodimer. Part of the essential Sec protein translocation apparatus which comprises SecA, SecYEG and auxiliary proteins SecDF-YajC and YidC. Requires Zn(2+) as cofactor.

Its subcellular location is the cell inner membrane. The protein resides in the cytoplasm. It carries out the reaction ATP + H2O + cellular proteinSide 1 = ADP + phosphate + cellular proteinSide 2.. Its function is as follows. Part of the Sec protein translocase complex. Interacts with the SecYEG preprotein conducting channel. Has a central role in coupling the hydrolysis of ATP to the transfer of proteins into and across the cell membrane, serving both as a receptor for the preprotein-SecB complex and as an ATP-driven molecular motor driving the stepwise translocation of polypeptide chains across the membrane. This Sinorhizobium medicae (strain WSM419) (Ensifer medicae) protein is Protein translocase subunit SecA.